The following is a 176-amino-acid chain: Epididymal-specific lipocalin-9 (176 aa).

The N-terminal stretch at 1-15 is a signal peptide; sequence MALLLLSLGLSLIAA. Asn68 and Asn129 each carry an N-linked (GlcNAc...) asparagine glycan. The cysteines at positions 83 and 161 are disulfide-linked.

It belongs to the calycin superfamily. Lipocalin family.

It localises to the secreted. The sequence is that of Epididymal-specific lipocalin-9 from Homo sapiens (Human).